The chain runs to 406 residues: Peptide antibiotic transporter SbmA (406 aa).

The Periplasmic portion of the chain corresponds to 1–11; sequence MFKSFFPKPGT. A helical transmembrane segment spans residues 12-32; it reads FFLSAFVWALIAVIFWQAGGG. Residues 33–56 are Cytoplasmic-facing; sequence DWVARITGASGQIPISAARFWSLD. The helical transmembrane segment at 57-77 threads the bilayer; it reads FLIFYAYYIVCVGLFALFWFI. The Periplasmic segment spans residues 78–87; it reads YSPHRWQYWS. Residues 88 to 108 form a helical membrane-spanning segment; sequence ILGTALIIFVTWFLVEVGVAV. At 109–137 the chain is on the cytoplasmic side; the sequence is NAWYAPFYDLIQTALSSPHKVTIEQFYRE. The chain crosses the membrane as a helical span at residues 138 to 158; it reads VGVFLGIALIAVVISVLNNFF. Residues 159 to 205 lie on the Periplasmic side of the membrane; sequence VSHYVFRWRTAMNEYYMANWQQLRHIEGAAQRVQEDTMRFASTLENM. The chain crosses the membrane as a helical span at residues 206–226; the sequence is GVSFINAIMTLIAFLPVLVTL. Residues 227–242 lie on the Cytoplasmic side of the membrane; it reads SAHVPELPIIGHIPYG. Residues 243–263 traverse the membrane as a helical segment; sequence LVIAAIVWSLMGTGLLAVVGI. The Periplasmic portion of the chain corresponds to 264 to 331; that stretch reads KLPGLEFKNQ…ARILYLQVDN (68 aa). The helical transmembrane segment at 332-352 threads the bilayer; sequence VFGLFLLFPSIVAGTITLGLM. At 353–406 the chain is on the cytoplasmic side; the sequence is TQITNVFGQVRGAFQYLINSWTTLVELMSIYKRLRSFEHELDGDKIQEVTHTLS.

The protein belongs to the peptide uptake permease (PUP) (TC 9.A.18) family.

The protein resides in the cell inner membrane. Its function is as follows. Uptake of antimicrobial peptides. The polypeptide is Peptide antibiotic transporter SbmA (sbmA) (Escherichia coli O157:H7).